The chain runs to 614 residues: UvrABC system protein C (614 aa).

Residues 20–98 enclose the GIY-YIG domain; that stretch reads TAPGVYRMYA…IKSLSPRYNV (79 aa). The UVR domain occupies 207–242; sequence DELTRELGEQMQAASEALEFEQAARLRDLISSLRSM.

Belongs to the UvrC family. In terms of assembly, interacts with UvrB in an incision complex.

The protein localises to the cytoplasm. In terms of biological role, the UvrABC repair system catalyzes the recognition and processing of DNA lesions. UvrC both incises the 5' and 3' sides of the lesion. The N-terminal half is responsible for the 3' incision and the C-terminal half is responsible for the 5' incision. The protein is UvrABC system protein C of Stenotrophomonas maltophilia (strain R551-3).